The sequence spans 237 residues: Uridylate kinase (237 aa).

An ATP-binding site is contributed by 11-14 (KLSG). G53 lines the UMP pocket. Residues G54 and R58 each contribute to the ATP site. UMP is bound by residues D73 and 134 to 141 (TGNPFFTT). T161, Y167, and D170 together coordinate ATP.

The protein belongs to the UMP kinase family. In terms of assembly, homohexamer.

It is found in the cytoplasm. The catalysed reaction is UMP + ATP = UDP + ADP. It functions in the pathway pyrimidine metabolism; CTP biosynthesis via de novo pathway; UDP from UMP (UMPK route): step 1/1. Inhibited by UTP. Its function is as follows. Catalyzes the reversible phosphorylation of UMP to UDP. The sequence is that of Uridylate kinase from Burkholderia cenocepacia (strain HI2424).